The following is a 525-amino-acid chain: GMP synthase [glutamine-hydrolyzing] (525 aa).

Positions 9-207 (RILILDFGSQ…VSDICGCEKQ (199 aa)) constitute a Glutamine amidotransferase type-1 domain. Cys-86 functions as the Nucleophile in the catalytic mechanism. Active-site residues include His-181 and Glu-183. The region spanning 208 to 400 (WTPAKIIDDA…LGLPYNMLYR (193 aa)) is the GMPS ATP-PPase domain. Residue 235–241 (SGGVDSS) participates in ATP binding.

Homodimer.

The catalysed reaction is XMP + L-glutamine + ATP + H2O = GMP + L-glutamate + AMP + diphosphate + 2 H(+). Its pathway is purine metabolism; GMP biosynthesis; GMP from XMP (L-Gln route): step 1/1. Its function is as follows. Catalyzes the synthesis of GMP from XMP. The polypeptide is GMP synthase [glutamine-hydrolyzing] (Idiomarina loihiensis (strain ATCC BAA-735 / DSM 15497 / L2-TR)).